An 856-amino-acid polypeptide reads, in one-letter code: DNA mismatch repair protein MutS (856 aa).

618 to 625 (GPNMGGKS) provides a ligand contact to ATP.

Belongs to the DNA mismatch repair MutS family.

In terms of biological role, this protein is involved in the repair of mismatches in DNA. It is possible that it carries out the mismatch recognition step. This protein has a weak ATPase activity. In Shewanella putrefaciens (strain CN-32 / ATCC BAA-453), this protein is DNA mismatch repair protein MutS.